Reading from the N-terminus, the 310-residue chain is Choline trimethylamine-lyase activating enzyme (310 aa).

The Radical SAM core domain occupies 17 to 304; sequence YDGPGVRTLV…EACIRKYDFP (288 aa). Positions 31, 35, 38, 57, 60, 63, and 99 each coordinate [4Fe-4S] cluster. 37–39 contributes to the S-adenosyl-L-methionine binding site; that stretch reads WCS. 4Fe-4S ferredoxin-type domains lie at 48-77 and 79-109; these read YQVL…ISAS and LRHG…VVGE. Residues Gly-139, 188-190, and His-264 each bind S-adenosyl-L-methionine; that span reads DVK.

This sequence belongs to the organic radical-activating enzymes family. In terms of assembly, monomer. Requires [4Fe-4S] cluster as cofactor.

It catalyses the reaction glycyl-[protein] + reduced [flavodoxin] + S-adenosyl-L-methionine = glycin-2-yl radical-[protein] + semiquinone [flavodoxin] + 5'-deoxyadenosine + L-methionine + H(+). It functions in the pathway amine and polyamine metabolism; choline degradation. Catalyzes activation of the choline trimethylamine-lyase CutC under anaerobic conditions by generation of an organic free radical on a glycine residue, via a homolytic cleavage of S-adenosyl-L-methionine (SAM). Is involved in the anaerobic choline utilization pathway that allows D.alaskensis to grow on choline as a source of carbon and energy. The sequence is that of Choline trimethylamine-lyase activating enzyme from Oleidesulfovibrio alaskensis (strain ATCC BAA-1058 / DSM 17464 / G20) (Desulfovibrio alaskensis).